A 211-amino-acid polypeptide reads, in one-letter code: MLTIAIPKGALLSDAIKLFQSIGLDFSAFLDPKNRQLQITDPTNTAKALLVRATDVPVYVEYGQAQLGIVGYDLLLEKTPTVANLANLKFGYCRMSVAVPASSPYKSPVELPPNGKVASKFVNCAKKYFHTLDLPVEIIPLYGSVELGPITGMSEAIVDLVSTGRTLKENGLIEIDTLFESTAHLIAHPLSYRLNLDQINPWVTKIRDTLS.

It belongs to the ATP phosphoribosyltransferase family. Short subfamily. Heteromultimer composed of HisG and HisZ subunits.

It is found in the cytoplasm. It carries out the reaction 1-(5-phospho-beta-D-ribosyl)-ATP + diphosphate = 5-phospho-alpha-D-ribose 1-diphosphate + ATP. Its pathway is amino-acid biosynthesis; L-histidine biosynthesis; L-histidine from 5-phospho-alpha-D-ribose 1-diphosphate: step 1/9. Functionally, catalyzes the condensation of ATP and 5-phosphoribose 1-diphosphate to form N'-(5'-phosphoribosyl)-ATP (PR-ATP). Has a crucial role in the pathway because the rate of histidine biosynthesis seems to be controlled primarily by regulation of HisG enzymatic activity. This chain is ATP phosphoribosyltransferase, found in Rippkaea orientalis (strain PCC 8801 / RF-1) (Cyanothece sp. (strain PCC 8801)).